The primary structure comprises 142 residues: MVLSPADKTNVKAAWDKVGGHAGDYGAEALERMFLSFPTTKTYFPHFDLSHGSAQVKGHGKKVGDALGNAVAHMDDLPGALSALSDLHAYKLRVDPVNFKLLSHCLLVTLACHHPGDFTPAVHASLDKFLASVSTVLVSKYR.

The region spanning 2-142 (VLSPADKTNV…VSTVLVSKYR (141 aa)) is the Globin domain. At Ser-4 the chain carries Phosphoserine. At Lys-8 the chain carries N6-succinyllysine. Thr-9 is subject to Phosphothreonine. Position 12 is an N6-succinyllysine (Lys-12). An N6-acetyllysine; alternate modification is found at Lys-17. Lys-17 is modified (N6-succinyllysine; alternate). Tyr-25 is modified (phosphotyrosine). Residue Ser-36 is modified to Phosphoserine. The residue at position 41 (Lys-41) is an N6-succinyllysine. Ser-50 carries the phosphoserine modification. His-59 serves as a coordination point for O2. His-88 provides a ligand contact to heme b. A Phosphoserine modification is found at Ser-103. Residue Thr-109 is modified to Phosphothreonine. Residues Ser-125 and Ser-132 each carry the phosphoserine modification. Thr-135 carries the post-translational modification Phosphothreonine. Ser-139 carries the post-translational modification Phosphoserine.

This sequence belongs to the globin family. As to quaternary structure, heterotetramer of two alpha chains and two beta chains. Red blood cells.

Its function is as follows. Involved in oxygen transport from the lung to the various peripheral tissues. In terms of biological role, hemopressin acts as an antagonist peptide of the cannabinoid receptor CNR1. Hemopressin-binding efficiently blocks cannabinoid receptor CNR1 and subsequent signaling. The protein is Hemoglobin subunit alpha (HBA) of Antrozous pallidus (Pallid bat).